A 483-amino-acid polypeptide reads, in one-letter code: Cobyric acid synthase (483 aa).

Residues 248-435 (LLKVVVPVLP…LHGLFETPAA (188 aa)) enclose the GATase cobBQ-type domain. The active-site Nucleophile is the cysteine 329. Residue histidine 427 is part of the active site.

The protein belongs to the CobB/CobQ family. CobQ subfamily.

It functions in the pathway cofactor biosynthesis; adenosylcobalamin biosynthesis. In terms of biological role, catalyzes amidations at positions B, D, E, and G on adenosylcobyrinic A,C-diamide. NH(2) groups are provided by glutamine, and one molecule of ATP is hydrogenolyzed for each amidation. The polypeptide is Cobyric acid synthase (Pseudomonas fluorescens (strain ATCC BAA-477 / NRRL B-23932 / Pf-5)).